We begin with the raw amino-acid sequence, 819 residues long: Ion-translocating oxidoreductase complex subunit C (819 aa).

4Fe-4S ferredoxin-type domains lie at 368–398 (EYAE…QQLY) and 408–437 (KSEE…IQYF). Residues Cys-378, Cys-381, Cys-384, Cys-388, Cys-417, Cys-420, Cys-423, and Cys-427 each contribute to the [4Fe-4S] cluster site. 2 stretches are compositionally biased toward basic and acidic residues: residues 465-477 (QARM…ERKA) and 485-513 (ARRE…KANE). 3 disordered regions span residues 465 to 568 (QARM…NAKK), 580 to 677 (AKKL…TALD), and 692 to 793 (AKKL…PKKA). 2 stretches are compositionally biased toward polar residues: residues 554–565 (VENQEQQTQPTN) and 587–601 (NSTS…TAEN). The segment covering 602–614 (QVEKTKSAVEKTQ) has biased composition (basic and acidic residues). Residues 641-656 (QTNSTSEAISNSQTAE) show a composition bias toward polar residues. Positions 658–671 (EVEKTKSAVEKTEE) are enriched in basic and acidic residues. Composition is skewed to polar residues over residues 699–712 (NSAS…QTAE) and 755–768 (NSTS…QTAE). Positions 770-782 (EVEKTKSAVEKTQ) are enriched in basic and acidic residues.

This sequence belongs to the 4Fe4S bacterial-type ferredoxin family. RnfC subfamily. In terms of assembly, the complex is composed of six subunits: RnfA, RnfB, RnfC, RnfD, RnfE and RnfG. Requires [4Fe-4S] cluster as cofactor.

The protein localises to the cell inner membrane. Its function is as follows. Part of a membrane-bound complex that couples electron transfer with translocation of ions across the membrane. This Haemophilus influenzae (strain ATCC 51907 / DSM 11121 / KW20 / Rd) protein is Ion-translocating oxidoreductase complex subunit C.